A 313-amino-acid polypeptide reads, in one-letter code: D-alanine--D-alanine ligase (313 aa).

One can recognise an ATP-grasp domain in the interval 114-309 (KWLWKGVGLP…FSKLVLKLIS (196 aa)). Position 142 to 195 (142 to 195 (DLTFPVIVKPSHEGSSIGMRKVDTLDALQEAVDFAQQYDSEILIEQWITGREFT)) interacts with ATP. Residues Asp-263, Glu-276, and Asn-278 each contribute to the Mg(2+) site.

It belongs to the D-alanine--D-alanine ligase family. The cofactor is Mg(2+). It depends on Mn(2+) as a cofactor.

It localises to the cytoplasm. It carries out the reaction 2 D-alanine + ATP = D-alanyl-D-alanine + ADP + phosphate + H(+). Its pathway is cell wall biogenesis; peptidoglycan biosynthesis. Its function is as follows. Cell wall formation. The chain is D-alanine--D-alanine ligase from Hydrogenovibrio crunogenus (strain DSM 25203 / XCL-2) (Thiomicrospira crunogena).